Here is a 457-residue protein sequence, read N- to C-terminus: Phosphomethylpyrimidine synthase (457 aa).

Substrate-binding positions include asparagine 80, methionine 109, tyrosine 139, histidine 175, 195–197, 236–239, and glutamate 275; these read SRG and DSLR. Histidine 279 lines the Zn(2+) pocket. Tyrosine 302 contacts substrate. Histidine 343 provides a ligand contact to Zn(2+). Positions 423, 426, and 431 each coordinate [4Fe-4S] cluster.

This sequence belongs to the ThiC family. Requires [4Fe-4S] cluster as cofactor.

It carries out the reaction 5-amino-1-(5-phospho-beta-D-ribosyl)imidazole + S-adenosyl-L-methionine = 4-amino-2-methyl-5-(phosphooxymethyl)pyrimidine + CO + 5'-deoxyadenosine + formate + L-methionine + 3 H(+). Its pathway is cofactor biosynthesis; thiamine diphosphate biosynthesis. In terms of biological role, catalyzes the synthesis of the hydroxymethylpyrimidine phosphate (HMP-P) moiety of thiamine from aminoimidazole ribotide (AIR) in a radical S-adenosyl-L-methionine (SAM)-dependent reaction. The polypeptide is Phosphomethylpyrimidine synthase (Nostoc punctiforme (strain ATCC 29133 / PCC 73102)).